Consider the following 469-residue polypeptide: Mitochondrial adenyl nucleotide antiporter SLC25A25 (469 aa).

The interval 1 to 165 (MLCLCLYVPI…LYWKHSTIFD (165 aa)) is regulatory N-terminal domain. Residues 1–189 (MLCLCLYVPI…ERQTGMWWRH (189 aa)) lie on the Mitochondrial intermembrane side of the membrane. EF-hand domains are found at residues 47–80 (TYRQ…QDHE), 78–113 (DHEK…LGVK), and 114–149 (ISEQ…HPVE). Ca(2+)-binding residues include Asp-60, Asp-62, Asp-64, Gln-66, and Glu-71. The linker region stretch occupies residues 151–160 (IPEIILYWKH). The segment at 166–469 (VGENLTVPDE…LKITLGVQSR (304 aa)) is C-terminal transmembrane transporter domain. 3 Solcar repeats span residues 184–270 (GMWW…MKRL), 278–363 (LRIH…LKNT), and 375–463 (PGVF…LKIT). Residues 190–207 (LVAGGGAGAVSRTCTAPL) traverse the membrane as a helical segment. Topologically, residues 208–244 (DRLKVLMQVHASRSNNMCIVGGFTQMIREGGAKSLWR) are mitochondrial matrix. A helical membrane pass occupies residues 245 to 264 (GNGINVLKIAPESAIKFMAY). Residues 265 to 287 (EQMKRLVGSDQETLRIHERLVAG) are Mitochondrial intermembrane-facing. The chain crosses the membrane as a helical span at residues 288-301 (SLAGAIAQSSIYPM). Residues 302 to 337 (EVLKTRMALRKTGQYSGMLDCARRILAKEGVAAFYK) lie on the Mitochondrial matrix side of the membrane. The chain crosses the membrane as a helical span at residues 338-357 (GYIPNMLGIIPYAGIDLAVY). Residues 358–380 (ETLKNTWLQRYAVNSADPGVFVL) are Mitochondrial intermembrane-facing. A helical membrane pass occupies residues 381–398 (LACGTISSTCGQLASYPL). Topologically, residues 399–437 (ALVRTRMQAQASIEGAPEVTMSSLFKQILRTEGAFGLYR) are mitochondrial matrix. A helical transmembrane segment spans residues 438–457 (GLAPNFMKVIPAVSISYVVY). The Mitochondrial intermembrane portion of the chain corresponds to 458 to 469 (ENLKITLGVQSR).

Belongs to the mitochondrial carrier (TC 2.A.29) family.

It localises to the mitochondrion inner membrane. It catalyses the reaction Mg(2+)(out) + phosphate(in) + ATP(out) = Mg(2+)(in) + phosphate(out) + ATP(in). With respect to regulation, activated by an increase in cytosolic calcium levels that induce a conformational change of the N-terminal regulatory domain, uncapping the channel and allowing transport. In terms of biological role, electroneutral antiporter that most probably mediates the transport of adenyl nucleotides through the inner mitochondrial membrane. Originally identified as an ATP-magnesium/inorganic phosphate antiporter, it could have a broader specificity for adenyl nucleotides. By regulating the mitochondrial matrix adenyl nucleotide pool could adapt to changing cellular energetic demands and indirectly regulate adenyl nucleotide-dependent metabolic pathways. In Mus musculus (Mouse), this protein is Mitochondrial adenyl nucleotide antiporter SLC25A25.